The following is a 568-amino-acid chain: UPF0313 protein FN0734 (568 aa).

The Radical SAM core domain occupies 289 to 562 (ALDTIKYSVT…KQKQKDIVTE (274 aa)). [4Fe-4S] cluster contacts are provided by Cys303, Cys307, and Cys310. Residues 546-568 (VEKDNGKKQKQKDIVTEKRKNRK) are disordered.

The protein belongs to the UPF0313 family. [4Fe-4S] cluster serves as cofactor.

This chain is UPF0313 protein FN0734, found in Fusobacterium nucleatum subsp. nucleatum (strain ATCC 25586 / DSM 15643 / BCRC 10681 / CIP 101130 / JCM 8532 / KCTC 2640 / LMG 13131 / VPI 4355).